Reading from the N-terminus, the 488-residue chain is Probable aldehyde dehydrogenase (488 aa).

Residue glycine 240–glycine 245 participates in NAD(+) binding. Catalysis depends on residues glutamate 262 and cysteine 296.

It belongs to the aldehyde dehydrogenase family.

It catalyses the reaction an aldehyde + NAD(+) + H2O = a carboxylate + NADH + 2 H(+). Involved in an alpha-terpineol oxidation system. The polypeptide is Probable aldehyde dehydrogenase (terPE) (Pseudomonas sp).